The primary structure comprises 315 residues: MMQSSKWNAMSLLMDEKTKQAEVLRTAIDEADAIVIGIGAGMSASDGFTYVGERFTENFPDFIEKYRFFDMLQASLHPYGSWQEYWAFESRFITLNYLDQPVGQSYLALKSLVEGKQYHIITTNADNAFDAAEYDMTHVFHIQGEYILQQCSQHCHAQTYRNDDLIRKMVVAQQDMLIPWEMIPRCPKCDAPMEVNKRKAEVGMVEDAEFHAQLQRYNAFLEQHQDDKVLYLEIGIGYTTPQFVKHPFQRMTRKNENAIYMTMNKKAYRIPNSIQERTIHLTEDISTLITTALRNDSTTQNNNIGETEDVLNRTD.

Residues 13–299 enclose the Deacetylase sirtuin-type domain; the sequence is LMDEKTKQAE…TTALRNDSTT (287 aa). NAD(+) contacts are provided by residues Ala-40, 123–126, and Gln-143; that span reads TNAD. Positions 151, 155, 186, and 189 each coordinate Zn(2+). NAD(+) contacts are provided by residues 238–240, Asn-264, Tyr-268, and Ile-285; that span reads YTT.

It belongs to the sirtuin family. Class M subfamily. The cofactor is Zn(2+).

It catalyses the reaction L-aspartyl-[protein] + NAD(+) = 4-O-(ADP-D-ribosyl)-L-aspartyl-[protein] + nicotinamide. With respect to regulation, is inhibited by Tenovin-6 in vitro, but not by nicotinamide. Catalyzes specifically the mono-ADP-ribosylation of GcvH-L (SAV0324). This activity is dependent on prior lipoylation of the target protein. May be involved in the modulation of the response to host-derived oxidative stress. In contrast to other sirtuin classes, lacks protein deacylase activity, being unable to catalyze delipoylation, debiotinylation, deacetylation and desuccinylation of proteins. This is Protein ADP-ribosyltransferase from Staphylococcus aureus (strain Mu50 / ATCC 700699).